Consider the following 388-residue polypeptide: Succinate--CoA ligase [ADP-forming] subunit beta (388 aa).

The ATP-grasp domain maps to 9–244; it reads KQLFAEYGLP…PSQDDPREAH (236 aa). Residues Lys-46, 53 to 55, Glu-99, Thr-102, and Glu-107 each bind ATP; that span reads GRG. Residues Asn-199 and Asp-213 each contribute to the Mg(2+) site. Substrate is bound by residues Asn-264 and 321 to 323; that span reads GIV.

The protein belongs to the succinate/malate CoA ligase beta subunit family. As to quaternary structure, heterotetramer of two alpha and two beta subunits. It depends on Mg(2+) as a cofactor.

The enzyme catalyses succinate + ATP + CoA = succinyl-CoA + ADP + phosphate. It carries out the reaction GTP + succinate + CoA = succinyl-CoA + GDP + phosphate. It participates in carbohydrate metabolism; tricarboxylic acid cycle; succinate from succinyl-CoA (ligase route): step 1/1. Succinyl-CoA synthetase functions in the citric acid cycle (TCA), coupling the hydrolysis of succinyl-CoA to the synthesis of either ATP or GTP and thus represents the only step of substrate-level phosphorylation in the TCA. The beta subunit provides nucleotide specificity of the enzyme and binds the substrate succinate, while the binding sites for coenzyme A and phosphate are found in the alpha subunit. This is Succinate--CoA ligase [ADP-forming] subunit beta from Pseudomonas putida (strain GB-1).